The following is a 111-amino-acid chain: Small ribosomal subunit protein bS16 (111 aa).

The protein belongs to the bacterial ribosomal protein bS16 family.

The protein is Small ribosomal subunit protein bS16 of Rickettsia typhi (strain ATCC VR-144 / Wilmington).